A 391-amino-acid chain; its full sequence is Lipid-A-disaccharide synthase (391 aa).

Belongs to the LpxB family.

It carries out the reaction a lipid X + a UDP-2-N,3-O-bis[(3R)-3-hydroxyacyl]-alpha-D-glucosamine = a lipid A disaccharide + UDP + H(+). Its pathway is bacterial outer membrane biogenesis; LPS lipid A biosynthesis. Its function is as follows. Condensation of UDP-2,3-diacylglucosamine and 2,3-diacylglucosamine-1-phosphate to form lipid A disaccharide, a precursor of lipid A, a phosphorylated glycolipid that anchors the lipopolysaccharide to the outer membrane of the cell. This chain is Lipid-A-disaccharide synthase, found in Aromatoleum aromaticum (strain DSM 19018 / LMG 30748 / EbN1) (Azoarcus sp. (strain EbN1)).